We begin with the raw amino-acid sequence, 259 residues long: Phosphatidylglycerol--prolipoprotein diacylglyceryl transferase (259 aa).

4 helical membrane-spanning segments follow: residues 12–32 (LSLH…VYLA), 46–66 (IIDF…IYYV), 83–103 (IWNG…VLFV), and 109–129 (VLNP…AQAI). R131 lines the a 1,2-diacyl-sn-glycero-3-phospho-(1'-sn-glycerol) pocket. The next 3 helical transmembrane spans lie at 167 to 187 (VPTF…IMVW), 194 to 214 (LVDG…RLVI), and 226 to 246 (GIRV…VFIF).

The protein belongs to the Lgt family.

It is found in the cell membrane. The enzyme catalyses L-cysteinyl-[prolipoprotein] + a 1,2-diacyl-sn-glycero-3-phospho-(1'-sn-glycerol) = an S-1,2-diacyl-sn-glyceryl-L-cysteinyl-[prolipoprotein] + sn-glycerol 1-phosphate + H(+). It functions in the pathway protein modification; lipoprotein biosynthesis (diacylglyceryl transfer). Catalyzes the transfer of the diacylglyceryl group from phosphatidylglycerol to the sulfhydryl group of the N-terminal cysteine of a prolipoprotein, the first step in the formation of mature lipoproteins. The chain is Phosphatidylglycerol--prolipoprotein diacylglyceryl transferase from Streptococcus equi subsp. equi (strain 4047).